Consider the following 452-residue polypeptide: Bifunctional protein GlmU (452 aa).

The segment at methionine 1–lysine 232 is pyrophosphorylase. UDP-N-acetyl-alpha-D-glucosamine contacts are provided by residues leucine 11–glycine 14, lysine 25, glutamine 78, and glycine 83–threonine 84. Residue aspartate 108 participates in Mg(2+) binding. UDP-N-acetyl-alpha-D-glucosamine is bound by residues glycine 144, glutamate 158, asparagine 173, and asparagine 230. Asparagine 230 contributes to the Mg(2+) binding site. The interval alanine 233–alanine 253 is linker. An N-acetyltransferase region spans residues glycine 254 to histidine 452. UDP-N-acetyl-alpha-D-glucosamine is bound by residues arginine 319 and lysine 337. Catalysis depends on histidine 349, which acts as the Proton acceptor. UDP-N-acetyl-alpha-D-glucosamine is bound by residues tyrosine 352 and asparagine 363. Acetyl-CoA-binding positions include alanine 366, asparagine 372–tyrosine 373, serine 391, serine 409, and arginine 426.

The protein in the N-terminal section; belongs to the N-acetylglucosamine-1-phosphate uridyltransferase family. In the C-terminal section; belongs to the transferase hexapeptide repeat family. In terms of assembly, homotrimer. The cofactor is Mg(2+).

It localises to the cytoplasm. The enzyme catalyses alpha-D-glucosamine 1-phosphate + acetyl-CoA = N-acetyl-alpha-D-glucosamine 1-phosphate + CoA + H(+). The catalysed reaction is N-acetyl-alpha-D-glucosamine 1-phosphate + UTP + H(+) = UDP-N-acetyl-alpha-D-glucosamine + diphosphate. Its pathway is nucleotide-sugar biosynthesis; UDP-N-acetyl-alpha-D-glucosamine biosynthesis; N-acetyl-alpha-D-glucosamine 1-phosphate from alpha-D-glucosamine 6-phosphate (route II): step 2/2. It functions in the pathway nucleotide-sugar biosynthesis; UDP-N-acetyl-alpha-D-glucosamine biosynthesis; UDP-N-acetyl-alpha-D-glucosamine from N-acetyl-alpha-D-glucosamine 1-phosphate: step 1/1. The protein operates within bacterial outer membrane biogenesis; LPS lipid A biosynthesis. Catalyzes the last two sequential reactions in the de novo biosynthetic pathway for UDP-N-acetylglucosamine (UDP-GlcNAc). The C-terminal domain catalyzes the transfer of acetyl group from acetyl coenzyme A to glucosamine-1-phosphate (GlcN-1-P) to produce N-acetylglucosamine-1-phosphate (GlcNAc-1-P), which is converted into UDP-GlcNAc by the transfer of uridine 5-monophosphate (from uridine 5-triphosphate), a reaction catalyzed by the N-terminal domain. This is Bifunctional protein GlmU from Rhodopseudomonas palustris (strain TIE-1).